The primary structure comprises 354 residues: DNA polymerase IV (354 aa).

The UmuC domain occupies Ile-8–Gly-189. Residues Asp-12 and Asp-107 each coordinate Mg(2+). Residue Glu-108 is part of the active site.

This sequence belongs to the DNA polymerase type-Y family. Monomer. The cofactor is Mg(2+).

It localises to the cytoplasm. The catalysed reaction is DNA(n) + a 2'-deoxyribonucleoside 5'-triphosphate = DNA(n+1) + diphosphate. In terms of biological role, poorly processive, error-prone DNA polymerase involved in untargeted mutagenesis. Copies undamaged DNA at stalled replication forks, which arise in vivo from mismatched or misaligned primer ends. These misaligned primers can be extended by PolIV. Exhibits no 3'-5' exonuclease (proofreading) activity. May be involved in translesional synthesis, in conjunction with the beta clamp from PolIII. In Vibrio vulnificus (strain CMCP6), this protein is DNA polymerase IV.